The sequence spans 411 residues: Mannan endo-1,4-beta-mannosidase 1 (411 aa).

Residues 1–17 form the signal peptide; it reads MLNILPFFLFFLPFLIG. The N-linked (GlcNAc...) asparagine glycan is linked to Asn33. Substrate-binding residues include Trp87 and Asn197. Glu198 serves as the catalytic Proton donor. Asn202 carries N-linked (GlcNAc...) asparagine glycosylation. Position 277 (Tyr277) interacts with substrate. The active-site Nucleophile is the Glu319. Trp361 lines the substrate pocket. Residues Asn366 and Asn384 are each glycosylated (N-linked (GlcNAc...) asparagine).

This sequence belongs to the glycosyl hydrolase 5 (cellulase A) family. Expressed in roots, stems and flowers.

It localises to the secreted. The enzyme catalyses Random hydrolysis of (1-&gt;4)-beta-D-mannosidic linkages in mannans, galactomannans and glucomannans.. This is Mannan endo-1,4-beta-mannosidase 1 (MAN1) from Arabidopsis thaliana (Mouse-ear cress).